Here is a 234-residue protein sequence, read N- to C-terminus: MSRRYWNIDLEEMMEARVHLGHKTRKWNPKMAPYIFTERKDTHIINLAKTARSLSEACDLLFDIAGRGKQFLIVGTKYQATDLVASAATEARCHYVNRKWLGGMLTNWSTTETRLQKFKDLKKEQDTGRFNQLPKKEAAMLKRQLDQLQKYLGGIRYMTSLPDIAIITNQREESIALGECRTLGIPTICLVDTDCDPDLVDIPIPANDDGIASIQLILNRLTSAICEGRALRSL.

This sequence belongs to the universal ribosomal protein uS2 family.

Its subcellular location is the plastid. The protein resides in the chloroplast. The polypeptide is Small ribosomal subunit protein uS2c (rps2) (Pinus thunbergii (Japanese black pine)).